A 462-amino-acid chain; its full sequence is Probable Xaa-Pro aminopeptidase NECHADRAFT_60613 (462 aa).

Residues aspartate 259, aspartate 270, glutamate 393, and glutamate 433 each contribute to the Mn(2+) site.

It belongs to the peptidase M24B family. The cofactor is Mn(2+).

It carries out the reaction Release of any N-terminal amino acid, including proline, that is linked to proline, even from a dipeptide or tripeptide.. Catalyzes the removal of a penultimate prolyl residue from the N-termini of peptides. This chain is Probable Xaa-Pro aminopeptidase NECHADRAFT_60613, found in Fusarium vanettenii (strain ATCC MYA-4622 / CBS 123669 / FGSC 9596 / NRRL 45880 / 77-13-4) (Fusarium solani subsp. pisi).